We begin with the raw amino-acid sequence, 267 residues long: Hydroxynaphthalene reductase-like protein Arp2 (267 aa).

4 residues coordinate NADP(+): I25, N45, D71, and N98. Catalysis depends on proton donor residues S147 and S148. Positions 162, 166, 195, and 197 each coordinate NADP(+). Y162 serves as the catalytic Proton acceptor. Catalysis depends on K166, which acts as the Lowers pKa of active site Tyr.

Belongs to the short-chain dehydrogenases/reductases (SDR) family.

Hydroxynaphthalene reductase-like protein; part of the Pks2 gene cluster that mediates the formation of infectious structures (appressoria), enabling these fungi to kill insects faster. The product of the Pks2 gene cluster is different from the one of Pks1 and has still not been identified. The protein is Hydroxynaphthalene reductase-like protein Arp2 of Metarhizium brunneum (strain ARSEF 3297).